The following is a 778-amino-acid chain: Probable cation-transporting ATPase exp7 (778 aa).

At 1-37 (MDKNKIMGLTQREVKERQAEGLVNDFTASASTSTWQI) the chain is on the cytoplasmic side. The helical transmembrane segment at 38–57 (VKRNVFTLFNALNFAIALAL) threads the bilayer. The Extracellular portion of the chain corresponds to 58 to 64 (AFVQAWS). A helical membrane pass occupies residues 65–84 (NLVFFAVICFNAFSGIVTEL). The Cytoplasmic segment spans residues 85–209 (RAKHMVDKLN…PINSRIMKSL (125 aa)). The helical transmembrane segment at 210 to 229 (DKLAGFTGKIIIPFGLALLL) threads the bilayer. Residues 230-242 (EALLLKGLPLKSS) are Extracellular-facing. Residues 243-260 (VVNSSTALLGMLPKGIAL) traverse the membrane as a helical segment. The Cytoplasmic segment spans residues 261-586 (LTITSLLTAV…FEGRRVVNNI (326 aa)). Catalysis depends on D298, which acts as the 4-aspartylphosphate intermediate. Mg(2+) contacts are provided by D532 and D536. A helical transmembrane segment spans residues 587-606 (AHIAPIFLIKTIYSFLLAVI). Residues 607-624 (CIASALLGRSEWILIFPF) lie on the Extracellular side of the membrane. Residues 625 to 645 (IPIQITMIDQFVEGFPPFVLT) traverse the membrane as a helical segment. At 646 to 663 (FERNIKPVEQNFLRKSML) the chain is on the cytoplasmic side. The chain crosses the membrane as a helical span at residues 664-684 (RALPSALMVVFSVLFVKMFGA). Topologically, residues 685 to 689 (SQGWS) are extracellular. A helical transmembrane segment spans residues 690–708 (ELEISTLLYYLLGSIGFLS). At 709–716 (VFRACMPF) the chain is on the cytoplasmic side. Residues 717–739 (TLWRVLLIVWSVGGFLATALFPR) form a helical membrane-spanning segment. The Extracellular segment spans residues 740–757 (IQKLLEISTLTEQTLPVY). The chain crosses the membrane as a helical span at residues 758 to 777 (GVMMLVFTVIFILTSRYQAK). Residue K778 is a topological domain, cytoplasmic.

Belongs to the cation transport ATPase (P-type) (TC 3.A.3) family.

The protein resides in the cell membrane. It carries out the reaction ATP + H2O = ADP + phosphate + H(+). This chain is Probable cation-transporting ATPase exp7 (exp7), found in Streptococcus pneumoniae serotype 4 (strain ATCC BAA-334 / TIGR4).